We begin with the raw amino-acid sequence, 1522 residues long: MSRNDKEPFFVKFLKSSDNSKCFFKALESIKEFQSEEYLQIITEEEALKIKENDRSLYICDPFSGVVFDHLKKLGCRIVGPQVVIFCMHHQRCVPRAEHPVYNMVMSDVTISCTSLEKEKREEVHKYVQMMGGRVYRDLNVSVTHLIAGEVGSKKYLVAANLKKPILLPSWIKTLWEKSQEKKITRYTDINMEDFKCPIFLGCIICVTGLCGLDRKEVQQLTVKHGGQYMGQLKMNECTHLIVQEPKGQKYECAKRWNVHCVTTQWFFDSIEKGFCQDESIYKTEPRPEAKTMPNSSTPTSQINTIDSRTLSDVSNISNINASCVSESICNSLNSKLEPTLENLENLDVSAFQAPEDLLDGCRIYLCGFSGRKLDKLRRLINSGGGVRFNQLNEDVTHVIVGDYDDELKQFWNKSAHRPHVVGAKWLLECFSKGYMLSEEPYIHANYQPVEIPVSHKPESKAALLKKKNSSFSKKDFAPSEKHEQADEDLLSQYENGSSTVVEAKTSEARPFNDSTHAEPLNDSTHISLQEENQSSVSHCVPDVSTITEEGLFSQKSFLVLGFSNENESNIANIIKENAGKIMSLLSRTVADYAVVPLLGCEVEATVGEVVTNTWLVTCIDYQTLFDPKSNPLFTPVPVMTGMTPLEDCVISFSQCAGAEKESLTFLANLLGASVQEYFVRKSNAKKGMFASTHLILKERGGSKYEAAKKWNLPAVTIAWLLETARTGKRADESHFLIENSTKEERSLETEITNGINLNSDTAEHPGTRLQTHRKTVVTPLDMNRFQSKAFRAVVSQHARQVAASPAVGQPLQKEPSLHLDTPSKFLSKDKLFKPSFDVKDALAALETPGRPSQQKRKPSTPLSEVIVKNLQLALANSSRNAVALSASPQLKEAQSEKEEAPKPLHKVVVCVSKKLSKKQSELNGIAASLGADYRWSFDETVTHFIYQGRPNDTNREYKSVKERGVHIVSEHWLLDCAQECKHLPESLYPHTYNPKMSLDISAVQDGRLCNSRLLSAVSSTKDDEPDPLILEENDVDNMATNNKESAPSNGSGKNDSKGVLTQTLEMRENFQKQLQEIMSATSIVKPQGQRTSLSRSGCNSASSTPDSTRSARSGRSRVLEALRQSRQTVPDVNTEPSQNEQIIWDDPTAREERARLASNLQWPSCPTQYSELQVDIQNLEDSPFQKPLHDSEIAKQAVCDPGNIRVTEAPKHPISEELETPIKDSHLIPTPQAPSIAFPLANPPVAPHPREKIITIEETHEELKKQYIFQLSSLNPQERIDYCHLIEKLGGLVIEKQCFDPTCTHIVVGHPLRNEKYLASVAAGKWVLHRSYLEACRTAGHFVQEEDYEWGSSSILDVLTGINVQQRRLALAAMRWRKKIQQRQESGIVEGAFSGWKVILHVDQSREAGFKRLLQSGGAKVLPGHSVPLFKEATHLFSDLNKLKPDDSGVNIAEAAAQNVYCLRTEYIADYLMQESPPHVENYCLPEAISFIQNNKELGTGLSQKRKAPTEKNKIKRPRVH.

BRCT domains lie at 101-189 (VYNM…RYTD) and 195-284 (FKCP…IYKT). Thr298 carries the post-translational modification Phosphothreonine. Ser301 bears the Phosphoserine mark. 3 BRCT domains span residues 354-444 (APED…PYIH), 548-633 (TEEG…SNPL), and 641-738 (TGMT…HFLI). Residues 756-891 (INLNSDTAEH…AVALSASPQL (136 aa)) are interaction with CIP2A. Residues Thr779 and Thr848 each carry the phosphothreonine modification. The Nuclear localization signal motif lies at 852–858 (PSQQKRK). Ser860 is modified (phosphoserine). Residue Thr861 is modified to Phosphothreonine. Ser864, Ser886, and Ser888 each carry phosphoserine. A BRCT 6 domain is found at 900-991 (EAPKPLHKVV…KHLPESLYPH (92 aa)). Position 1002 is a phosphoserine (Ser1002). A disordered region spans residues 1018-1058 (VSSTKDDEPDPLILEENDVDNMATNNKESAPSNGSGKNDSK). The segment covering 1024 to 1036 (DEPDPLILEENDV) has biased composition (acidic residues). Residues 1039–1058 (MATNNKESAPSNGSGKNDSK) show a composition bias toward polar residues. 2 positions are modified to phosphothreonine: Thr1062 and Thr1064. Residues 1083-1114 (SIVKPQGQRTSLSRSGCNSASSTPDSTRSARS) are compositionally biased toward polar residues. Residues 1083–1118 (SIVKPQGQRTSLSRSGCNSASSTPDSTRSARSGRSR) form a disordered region. BRCT domains lie at 1259 to 1351 (ETHE…DYEW) and 1389 to 1486 (IVEG…NYCL). Positions 1501–1522 (TGLSQKRKAPTEKNKIKRPRVH) are disordered. Ser1504 carries the post-translational modification Phosphoserine. Positions 1517 to 1520 (KRPR) match the Nuclear localization signal motif.

The protein belongs to the TOPBP1 family. As to quaternary structure, interacts (via BRCT domains 1 and 2) with (phosphorylated) MDC1; promoting TOPBP1 recruitment to DNA damage sites during mitosis. Interacts (via BRCT domains 7 and 8) with (autophosphorylated) ATR; promoting activation of ATR. Interacts (via BRCT domains 7 and 8) with (phosphorylated) POLQ; specifically binds POLQ phosphorylated by PLK1, promoting POLQ recruitment to DNA damage sites. Interacts (via BRCT domains 1 and 2) with (phosphorylated) RAD9A. Interacts (via BRCT domain 2) with (phosphorylated) TP53BP1. Interacts (via BRCT domain 2) with (phosphorylated) HTATSF1. Interacts (via BRCT domains 7 and 8) with (phosphorylated) RAD51; promoting RAD51 recruitment to damaged chromatin. Interacts with CIP2A; forming the CIP2A-TOPBP1 complex. Interacts with POLE. Interacts with UBR5. Interacts with E2F1. Interacts with PML. Interacts with SMARCA2. Interacts with SMARCA4. Interacts with RHNO1. May interact with TOP2B. Interacts with TICRR. Interacts with HELB. Interacts (via residues 1233-1522) with RECQL4. In terms of processing, phosphorylated on serine and threonine residues in response to X-ray irradiation. Ubiquitinated and degraded by the proteasome. X-ray irradiation reduces ubiquitination. Deubiquitinated by USP13; leading to TOPBP1 stabilizion and activation of the ATR-TOPBP1 axis pathway. Highly expressed in heart, brain, placenta, lung and kidney.

The protein resides in the nucleus. It is found in the chromosome. Its subcellular location is the cytoplasm. It localises to the cytoskeleton. The protein localises to the microtubule organizing center. The protein resides in the centrosome. It is found in the spindle pole. Scaffold protein that acts as a key protein-protein adapter in DNA replication and DNA repair. Composed of multiple BRCT domains, which specifically recognize and bind phosphorylated proteins, bringing proteins together into functional combinations. Required for DNA replication initiation but not for the formation of pre-replicative complexes or the elongation stages. Necessary for the loading of replication factors onto chromatin, including GMNC, CDC45, DNA polymerases and components of the GINS complex. Plays a central role in DNA repair by bridging proteins and promoting recruitment of proteins to DNA damage sites. Involved in double-strand break (DSB) repair via homologous recombination in S-phase by promoting the exchange between the DNA replication factor A (RPA) complex and RAD51. Mechanistically, TOPBP1 is recruited to DNA damage sites in S-phase via interaction with phosphorylated HTATSF1, and promotes the loading of RAD51, thereby facilitating RAD51 nucleofilaments formation and RPA displacement, followed by homologous recombination. Involved in microhomology-mediated end-joining (MMEJ) DNA repair by promoting recruitment of polymerase theta (POLQ) to DNA damage sites during mitosis. MMEJ is an alternative non-homologous end-joining (NHEJ) machinery that takes place during mitosis to repair DSBs in DNA that originate in S-phase. Recognizes and binds POLQ phosphorylated by PLK1, enabling its recruitment to DSBs for subsequent repair. Involved in G1 DNA damage checkpoint by acting as a molecular adapter that couples TP53BP1 and the 9-1-1 complex. In response to DNA damage, triggers the recruitment of checkpoint signaling proteins on chromatin, which activate the CHEK1 signaling pathway and block S-phase progression. Acts as an activator of the kinase activity of ATR. Also required for chromosomal stability when DSBs occur during mitosis by forming filamentous assemblies that bridge MDC1 and tether broken chromosomes during mitosis. Together with CIP2A, plays an essential role in the response to genome instability generated by the presence of acentric chromosome fragments derived from shattered chromosomes within micronuclei. Micronuclei, which are frequently found in cancer cells, consist of chromatin surrounded by their own nuclear membrane: following breakdown of the micronuclear envelope, a process associated with chromothripsis, the CIP2A-TOPBP1 complex tethers chromosome fragments during mitosis to ensure clustered segregation of the fragments to a single daughter cell nucleus, facilitating re-ligation with limited chromosome scattering and loss. Recruits the SWI/SNF chromatin remodeling complex to E2F1-responsive promoters, thereby down-regulating E2F1 activity and inhibiting E2F1-dependent apoptosis during G1/S transition and after DNA damage. The chain is DNA topoisomerase 2-binding protein 1 from Homo sapiens (Human).